A 464-amino-acid polypeptide reads, in one-letter code: tRNA modification GTPase MnmE (464 aa).

(6S)-5-formyl-5,6,7,8-tetrahydrofolate contacts are provided by Arg25, Glu87, and Lys130. The TrmE-type G domain occupies 226 to 386 (GLSVVLAGQP…LRAELLRIAG (161 aa)). Asn236 provides a ligand contact to K(+). Residues 236-241 (NVGKSS), 255-261 (TPIAGTT), and 280-283 (DTAG) contribute to the GTP site. Ser240 is a Mg(2+) binding site. K(+) is bound by residues Thr255, Ile257, and Thr260. Thr261 provides a ligand contact to Mg(2+). Lys464 contributes to the (6S)-5-formyl-5,6,7,8-tetrahydrofolate binding site.

The protein belongs to the TRAFAC class TrmE-Era-EngA-EngB-Septin-like GTPase superfamily. TrmE GTPase family. In terms of assembly, homodimer. Heterotetramer of two MnmE and two MnmG subunits. The cofactor is K(+).

The protein localises to the cytoplasm. Exhibits a very high intrinsic GTPase hydrolysis rate. Involved in the addition of a carboxymethylaminomethyl (cmnm) group at the wobble position (U34) of certain tRNAs, forming tRNA-cmnm(5)s(2)U34. The polypeptide is tRNA modification GTPase MnmE (Burkholderia orbicola (strain AU 1054)).